The following is an 80-amino-acid chain: uncharacterized protein (80 aa).

This is an uncharacterized protein from Schizosaccharomyces pombe (strain 972 / ATCC 24843) (Fission yeast).